Here is a 473-residue protein sequence, read N- to C-terminus: Glucose-1-phosphate adenylyltransferase small subunit, chloroplastic/amyloplastic (473 aa).

A disordered region spans residues 1–36; the sequence is MDVPLASKTFPSPSPSKREQCNIDGHKSSSKHADLN. A compositionally biased stretch (basic and acidic residues) spans 16–36; that stretch reads SKREQCNIDGHKSSSKHADLN.

Belongs to the bacterial/plant glucose-1-phosphate adenylyltransferase family. In terms of assembly, heterotetramer. Abundantly expressed in the whole grains, a slightly less abundant expression is seen in leaves, while a low level expression is seen in the roots. A greater expression is seen in the endosperm than in the embryo and pericarp layers.

Its subcellular location is the plastid. It localises to the chloroplast. The protein resides in the amyloplast. It catalyses the reaction alpha-D-glucose 1-phosphate + ATP + H(+) = ADP-alpha-D-glucose + diphosphate. Its pathway is glycan biosynthesis; starch biosynthesis. With respect to regulation, insensitive to 3'phosphoglycerate and orthophosphate. Functionally, this protein plays a role in synthesis of starch. It catalyzes the synthesis of the activated glycosyl donor, ADP-glucose from Glc-1-P and ATP. The polypeptide is Glucose-1-phosphate adenylyltransferase small subunit, chloroplastic/amyloplastic (AGP-S) (Triticum aestivum (Wheat)).